Here is a 79-residue protein sequence, read N- to C-terminus: RNA-binding protein Hfq (79 aa).

The Sm domain occupies 10 to 70 (DVFLNTVRKQ…ISTIMPGQPV (61 aa)).

It belongs to the Hfq family. As to quaternary structure, homohexamer.

Its function is as follows. RNA chaperone that binds small regulatory RNA (sRNAs) and mRNAs to facilitate mRNA translational regulation in response to envelope stress, environmental stress and changes in metabolite concentrations. Also binds with high specificity to tRNAs. The polypeptide is RNA-binding protein Hfq (Bartonella tribocorum (strain CIP 105476 / IBS 506)).